The primary structure comprises 202 residues: Nucleoside triphosphate pyrophosphatase (202 aa).

Asp79 serves as the catalytic Proton acceptor.

The protein belongs to the Maf family. The cofactor is a divalent metal cation.

Its subcellular location is the cytoplasm. The catalysed reaction is a ribonucleoside 5'-triphosphate + H2O = a ribonucleoside 5'-phosphate + diphosphate + H(+). It catalyses the reaction a 2'-deoxyribonucleoside 5'-triphosphate + H2O = a 2'-deoxyribonucleoside 5'-phosphate + diphosphate + H(+). Nucleoside triphosphate pyrophosphatase. May have a dual role in cell division arrest and in preventing the incorporation of modified nucleotides into cellular nucleic acids. The polypeptide is Nucleoside triphosphate pyrophosphatase (Nitrobacter hamburgensis (strain DSM 10229 / NCIMB 13809 / X14)).